The sequence spans 196 residues: Protein GrpE (196 aa).

Residues Met1–His26 show a composition bias toward basic and acidic residues. The segment at Met1–Gly40 is disordered.

It belongs to the GrpE family. As to quaternary structure, homodimer.

Its subcellular location is the cytoplasm. Its function is as follows. Participates actively in the response to hyperosmotic and heat shock by preventing the aggregation of stress-denatured proteins, in association with DnaK and GrpE. It is the nucleotide exchange factor for DnaK and may function as a thermosensor. Unfolded proteins bind initially to DnaJ; upon interaction with the DnaJ-bound protein, DnaK hydrolyzes its bound ATP, resulting in the formation of a stable complex. GrpE releases ADP from DnaK; ATP binding to DnaK triggers the release of the substrate protein, thus completing the reaction cycle. Several rounds of ATP-dependent interactions between DnaJ, DnaK and GrpE are required for fully efficient folding. This is Protein GrpE from Nitrosomonas eutropha (strain DSM 101675 / C91 / Nm57).